A 237-amino-acid chain; its full sequence is Ribosomal RNA small subunit methyltransferase G (237 aa).

S-adenosyl-L-methionine is bound by residues Gly75, Phe80, 127–128 (AE), and Arg146.

This sequence belongs to the methyltransferase superfamily. RNA methyltransferase RsmG family.

It localises to the cytoplasm. Its function is as follows. Specifically methylates the N7 position of a guanine in 16S rRNA. This is Ribosomal RNA small subunit methyltransferase G from Synechococcus sp. (strain RCC307).